The chain runs to 87 residues: Small ribosomal subunit protein bS20 (87 aa).

The tract at residues Met-1–Lys-22 is disordered.

It belongs to the bacterial ribosomal protein bS20 family.

Functionally, binds directly to 16S ribosomal RNA. This is Small ribosomal subunit protein bS20 from Ruegeria sp. (strain TM1040) (Silicibacter sp.).